A 101-amino-acid chain; its full sequence is Ribonuclease kappa-A (101 aa).

2 helical membrane passes run Ala13–Phe33 and Val68–Cys88.

The protein belongs to the RNase K family.

The protein resides in the membrane. Endoribonuclease which preferentially cleaves ApU and ApG phosphodiester bonds. The polypeptide is Ribonuclease kappa-A (rnasek-a) (Xenopus laevis (African clawed frog)).